The chain runs to 431 residues: Na(+)-translocating NADH-quinone reductase subunit F (431 aa).

The helical transmembrane segment at 10-30 (IFVASAAFCSLGLILVAVILL) threads the bilayer. A 2Fe-2S ferredoxin-type domain is found at 41–133 (CKLKINNDDS…DLCLEVEERY (93 aa)). [2Fe-2S] cluster contacts are provided by C76, C82, C85, and C117. The 151-residue stretch at 136–286 (ASSWEGTVVS…SGPYGESFMK (151 aa)) folds into the FAD-binding FR-type domain. The interval 289–413 (NRPVIFLIGG…ALHNSSILTL (125 aa)) is catalytic.

It belongs to the NqrF family. In terms of assembly, composed of six subunits; NqrA, NqrB, NqrC, NqrD, NqrE and NqrF. It depends on [2Fe-2S] cluster as a cofactor. Requires FAD as cofactor.

The protein resides in the cell inner membrane. The catalysed reaction is a ubiquinone + n Na(+)(in) + NADH + H(+) = a ubiquinol + n Na(+)(out) + NAD(+). NQR complex catalyzes the reduction of ubiquinone-1 to ubiquinol by two successive reactions, coupled with the transport of Na(+) ions from the cytoplasm to the periplasm. The first step is catalyzed by NqrF, which accepts electrons from NADH and reduces ubiquinone-1 to ubisemiquinone by a one-electron transfer pathway. The protein is Na(+)-translocating NADH-quinone reductase subunit F of Chlamydia trachomatis serovar D (strain ATCC VR-885 / DSM 19411 / UW-3/Cx).